The following is a 347-amino-acid chain: Methylthioribose-1-phosphate isomerase (347 aa).

Residues R45–A47, R88, and Q197 each bind substrate. The active-site Proton donor is the D238. N248 to K249 serves as a coordination point for substrate.

Belongs to the eIF-2B alpha/beta/delta subunits family. MtnA subfamily.

The catalysed reaction is 5-(methylsulfanyl)-alpha-D-ribose 1-phosphate = 5-(methylsulfanyl)-D-ribulose 1-phosphate. It participates in amino-acid biosynthesis; L-methionine biosynthesis via salvage pathway; L-methionine from S-methyl-5-thio-alpha-D-ribose 1-phosphate: step 1/6. Its function is as follows. Catalyzes the interconversion of methylthioribose-1-phosphate (MTR-1-P) into methylthioribulose-1-phosphate (MTRu-1-P). The sequence is that of Methylthioribose-1-phosphate isomerase from Trichormus variabilis (strain ATCC 29413 / PCC 7937) (Anabaena variabilis).